The primary structure comprises 500 residues: FAD-linked oxidoreductase chyH (500 aa).

An N-terminal signal peptide occupies residues methionine 1–serine 20. Positions leucine 65–isoleucine 235 constitute an FAD-binding PCMH-type domain. Residues asparagine 199, asparagine 266, asparagine 275, and asparagine 383 are each glycosylated (N-linked (GlcNAc...) asparagine).

Belongs to the oxygen-dependent FAD-linked oxidoreductase family. The cofactor is FAD.

It functions in the pathway pigment biosynthesis. Functionally, FAD-linked oxidoreductase; part of the gene cluster that mediates the biosynthesis of the yellow pigment chrysogine. the NRPS chyA mediates the condensation of anthranilic acid and alanine into the intermediate 2-(2-aminopropanamido)benzoic acid. The remainder of the pathway is highly branched yielding at least 13 chrysogine-related compounds. The malonyl transferase chyE converts 2-(2-aminopropanamido)benzoic acid and 2-(2-aminopropanamido)benzamidine into 2-(2-(2-carboxyacetamido)propanamido)benzoic acid and 3-((1-((2-carbamoylphenyl)amino)-1-oxopropan-2-yl)amino)-3-oxopropanoic acid, respectively. ChyD is an amidase, being responsible for the amidation of the carboxylic acid moiety of 2-(2-aminopropanamido)benzoic acid, 2-(2-(2-carboxyacetamido)propanamido)benzoic acid and 2-(2-((4-amino-1-carboxy-4-oxobutyl)amino)propanamido)benzoic acid. ChyC is involved in the same reactions as ChyD, but plays a more minor role in the amidation reactions compared to chyD. The oxidoreductases chyH and chyM are involved in oxidation reactions that form N-pyruvoylanthranilamide from 2-(2-aminopropanamido)benzamidine and (1-((2-carbamoylphenyl)amino)-1-oxopropan-2-yl)glutamine, respectively. N-pyruvoylanthranilamide is further converted via two further branches in the pathway, yielding chrysogine and additional chrysogine-related coumpounds. Chrysogine is likely formed by a spontaneous ring closure from N-pyruvoylanthranilamide. The chain is FAD-linked oxidoreductase chyH from Penicillium rubens (strain ATCC 28089 / DSM 1075 / NRRL 1951 / Wisconsin 54-1255) (Penicillium chrysogenum).